A 347-amino-acid polypeptide reads, in one-letter code: MSTAPLSGFFLTSLSPSQSSLQKLSLRTSSTVACLPPASSSSSSSSSSSSRSVPTLIRNEPVFAAPAPIIAPYWSEEMGTEAYDEAIEALKKLLIEKEELKTVAAAKVEQITAALQTGTSSDKKAFDPVETIKQGFIKFKKEKYETNPALYGELAKGQSPKYMVFACSDSRVCPSHVLDFQPGDAFVVRNIANMVPPFDKVKYGGVGAAIEYAVLHLKVENIVVIGHSACGGIKGLMSFPLDGNNSTDFIEDWVKICLPAKSKVISELGDSAFEDQCGRCEREAVNVSLANLLTYPFVREGLVKGTLALKGGYYDFVKGAFELWGLEFGLSETSSVKDVATILHWKL.

The N-terminal 113 residues, 1–113 (MSTAPLSGFF…AAAKVEQITA (113 aa)), are a transit peptide targeting the chloroplast. N-acetylalanine is present on A114. S175 carries the post-translational modification Phosphoserine. Y203 is modified (phosphotyrosine). At S266 the chain carries Phosphoserine. C280 is subject to S-nitrosocysteine.

Belongs to the beta-class carbonic anhydrase family. As to quaternary structure, homohexamer. S-nitrosylation at Cys-280 is up-regulated during nitrosative burst and suppresses both binding of salicylic acid and carbonic anhydrase activity. S-nitrosylated in response to an avirulent but not to a virulent bacterial strain. Strongly expressed in aerial tissues including leaves, stems, flowers and siliques. Accumulates in both guard cells and mesophyll cells.

The protein localises to the plastid. It is found in the chloroplast stroma. The protein resides in the cell membrane. It carries out the reaction hydrogencarbonate + H(+) = CO2 + H2O. Its function is as follows. Reversible hydration of carbon dioxide. Required for photosynthesis in cotyledons. Binds salicylic acid. Together with BCA4, involved in the CO(2) signaling pathway which controls gas-exchange between plants and the atmosphere by modulating stomatal development and movements. Promotes water use efficiency. The chain is Beta carbonic anhydrase 1, chloroplastic from Arabidopsis thaliana (Mouse-ear cress).